A 348-amino-acid polypeptide reads, in one-letter code: MTYNIVALPGDGIGPEILNGSLSLLEIISNKYNFNYQIEHHEFGGASIDTFGEPLTEKTLNACKRADAILLGAIGGPKWTDPNNRPEQGLLKLRKSLNLFANIRPTTVVKGASSLSPLKAERVEGTDLVIVRELTSGIYFGEPRYFNNHEALDSLTYTREEIERIVHVAFKLAASRRGKLTSVDKENVLASSKLWRKVVNEVSQLYPEVTVNHLLVDACSMHLITNPKQFDVIVYENLFGDILSDEASVIPGSLGLSPSASFSNDGPRLYEPIHGSAPDIAGKNVANPFGMILSLAMCLRESLNQPDAADELEQHIYNMIEHGQTTADLGGKLNTTDIFEILSQKLNH.

76 to 87 contacts NAD(+); that stretch reads GPKWTDPNNRPE. 4 residues coordinate substrate: R94, R104, R132, and D217. The Mg(2+) site is built by D217, D241, and D245. 275 to 287 is a binding site for NAD(+); the sequence is GSAPDIAGKNVAN.

It belongs to the isocitrate and isopropylmalate dehydrogenases family. LeuB type 1 subfamily. As to quaternary structure, homodimer. Mg(2+) is required as a cofactor. Requires Mn(2+) as cofactor.

The protein resides in the cytoplasm. The catalysed reaction is (2R,3S)-3-isopropylmalate + NAD(+) = 4-methyl-2-oxopentanoate + CO2 + NADH. The protein operates within amino-acid biosynthesis; L-leucine biosynthesis; L-leucine from 3-methyl-2-oxobutanoate: step 3/4. Catalyzes the oxidation of 3-carboxy-2-hydroxy-4-methylpentanoate (3-isopropylmalate) to 3-carboxy-4-methyl-2-oxopentanoate. The product decarboxylates to 4-methyl-2 oxopentanoate. This Staphylococcus aureus (strain MRSA252) protein is 3-isopropylmalate dehydrogenase.